The primary structure comprises 182 residues: Isopentenyl-diphosphate Delta-isomerase (182 aa).

The Mn(2+) site is built by H25 and H32. Residues L30–M164 enclose the Nudix hydrolase domain. C67 is an active-site residue. H69 contacts Mn(2+). Position 87 (E87) interacts with Mg(2+). Mn(2+)-binding residues include E114 and E116. Residue E116 is part of the active site.

The protein belongs to the IPP isomerase type 1 family. As to quaternary structure, homodimer. Mg(2+) serves as cofactor. Requires Mn(2+) as cofactor.

It localises to the cytoplasm. It catalyses the reaction isopentenyl diphosphate = dimethylallyl diphosphate. The protein operates within isoprenoid biosynthesis; dimethylallyl diphosphate biosynthesis; dimethylallyl diphosphate from isopentenyl diphosphate: step 1/1. Its function is as follows. Catalyzes the 1,3-allylic rearrangement of the homoallylic substrate isopentenyl (IPP) to its highly electrophilic allylic isomer, dimethylallyl diphosphate (DMAPP). This is Isopentenyl-diphosphate Delta-isomerase from Shigella flexneri serotype 5b (strain 8401).